The primary structure comprises 257 residues: Pyridoxine 5'-phosphate synthase (257 aa).

Asparagine 6 contacts 3-amino-2-oxopropyl phosphate. A 1-deoxy-D-xylulose 5-phosphate-binding site is contributed by 8–9 (DH). Arginine 17 contributes to the 3-amino-2-oxopropyl phosphate binding site. The Proton acceptor role is filled by histidine 42. 1-deoxy-D-xylulose 5-phosphate-binding residues include arginine 44 and histidine 49. Residue glutamate 69 is the Proton acceptor of the active site. Threonine 99 contacts 1-deoxy-D-xylulose 5-phosphate. Histidine 211 acts as the Proton donor in catalysis. 3-amino-2-oxopropyl phosphate is bound by residues glycine 212 and 233–234 (GQ).

The protein belongs to the PNP synthase family. As to quaternary structure, homooctamer; tetramer of dimers.

Its subcellular location is the cytoplasm. The enzyme catalyses 3-amino-2-oxopropyl phosphate + 1-deoxy-D-xylulose 5-phosphate = pyridoxine 5'-phosphate + phosphate + 2 H2O + H(+). Its pathway is cofactor biosynthesis; pyridoxine 5'-phosphate biosynthesis; pyridoxine 5'-phosphate from D-erythrose 4-phosphate: step 5/5. Catalyzes the complicated ring closure reaction between the two acyclic compounds 1-deoxy-D-xylulose-5-phosphate (DXP) and 3-amino-2-oxopropyl phosphate (1-amino-acetone-3-phosphate or AAP) to form pyridoxine 5'-phosphate (PNP) and inorganic phosphate. In Campylobacter fetus subsp. fetus (strain 82-40), this protein is Pyridoxine 5'-phosphate synthase.